A 314-amino-acid chain; its full sequence is Fumarylacetoacetate hydrolase domain-containing protein 2 (314 aa).

A divalent metal cation contacts are provided by E159, E161, and D190. Position 203 is an N6-acetyllysine; alternate (K203). K203 bears the N6-succinyllysine; alternate mark. Position 234 is an N6-acetyllysine (K234).

It belongs to the FAH family. It depends on Ca(2+) as a cofactor. Mg(2+) serves as cofactor.

Functionally, may have hydrolase activity. The chain is Fumarylacetoacetate hydrolase domain-containing protein 2 (FAHD2) from Pongo abelii (Sumatran orangutan).